The chain runs to 986 residues: Mediator of RNA polymerase II transcription subunit 24 (986 aa).

6 short sequence motifs (LXXLL motif) span residues 128 to 132, 341 to 345, 445 to 449, 554 to 558, 785 to 789, and 855 to 859; these read LNWLL, LTPLL, LDLLL, LVALL, LPNLL, and LMRLL.

The protein belongs to the Mediator complex subunit 24 family. Component of the Mediator complex.

The protein localises to the nucleus. Component of the Mediator complex, a coactivator involved in the regulated transcription of nearly all RNA polymerase II-dependent genes. Mediator functions as a bridge to convey information from gene-specific regulatory proteins to the basal RNA polymerase II transcription machinery. Mediator is recruited to promoters by direct interactions with regulatory proteins and serves as a scaffold for the assembly of a functional preinitiation complex with RNA polymerase II and the general transcription factors. This chain is Mediator of RNA polymerase II transcription subunit 24 (MED24), found in Gallus gallus (Chicken).